The following is an 829-amino-acid chain: MNEDAPMDLVDDRFADQSIQDEPVDDGESFYNEDVYVDCEEDEDDDVVPTSENFRLENRYKPSLHTPRELPTIREENREDVRSNTSSRVNTRPPSVLSDKSNDISNMFGFQDGGRAIDQYTDQFYSEGNRAERLFPEAGFLQNSPVRDKQNSWEPSVCHYEKQPTPEVKNNSPGLVFANMSSKKDVTRKQENVRPGKMMPEKVNDENEPKSRRFSPERNTFTTSPMNSTKYLEEKTSTPKRPGGTNRLGTRGLPSFECSTIYDISPQRTSGTPKTYESRHPTNAYTPNSATTSDTVLSNRTIGDNTVQNVLKGVDINLLTALENARKKRDRPQVKPDFRLNSLPRGKLSSTQRPKSDDHSSMTSIVSSSTQNNTGYRKIQEQRNSATSTDLTNSNTSNFTNNTSRVSTAKNDFSRSSRQRNGFSDSSVSTIIPNMNSMTTRDRDGRDSVSSVRTISRASSTMTVGGGNGHMTSGAPKPLRFHVSRLGFGYVPIGETLTMQLEVENTTDRPCKVNARLDSKITCFKVLDNATTMIDPKKAIKVRVAFTPTSLGRYSLYLKAEVAEQNFTQKIPVWGWGGVSKIAPISARNLQPTSNSSEFAMFVSDMKRIAFKLGNSGDRSGFALLTVYDSAMRQVPNSYVRFNPSNGIVIGKNYEKLIEIRIDPSYHDHYGELTNNRTSSAMSTVSTASSMASLRRRVIAGSDFFVQVAWGVEGIRERLRMLEMKHKRRQMIDGLDFTSHPFTDEKCVVYPPPDAYPTISDEDHDLFAASYSNFYINIFSSPDGLNAFRAATVSADKFDNDATVLETSAFRHQTFVNDVTMVPRHTKLM.

Disordered stretches follow at residues 1–29 (MNED…DGES), 41–104 (EDED…SNDI), 183–294 (KKDV…TTSD), and 326–471 (RKKR…NGHM). Residues 54-82 (FRLENRYKPSLHTPRELPTIREENREDVR) are compositionally biased toward basic and acidic residues. Residues 83 to 93 (SNTSSRVNTRP) are compositionally biased toward polar residues. Over residues 183-216 (KKDVTRKQENVRPGKMMPEKVNDENEPKSRRFSP) the composition is skewed to basic and acidic residues. Polar residues-rich tracts occupy residues 217 to 230 (ERNT…NSTK) and 266 to 294 (PQRT…TTSD). Positions 314–332 (VDINLLTALENARKKRDRP) form a coiled coil. Composition is skewed to low complexity over residues 361–370 (SMTSIVSSST) and 384–408 (NSAT…RVST). 2 stretches are compositionally biased toward polar residues: residues 409–439 (AKND…NSMT) and 448–463 (SVSS…STMT).

The protein resides in the cytoplasm. It is found in the cytoskeleton. Its subcellular location is the microtubule organizing center. The protein localises to the centrosome. It localises to the centriole. Functionally, required both for centrosome duplication and maturation. Required for pericentriolar material (PCM) recruitment. The protein is Spindle-defective protein 2 of Caenorhabditis briggsae.